A 145-amino-acid polypeptide reads, in one-letter code: MTKKYLKVDVVSPLGSVFKGEADMVSLRGSAGEMGIAYGHTELLSTLPAGVVNVRKDQHTDVLYVSGGIVEVTPTRVTIMVDDMERAENLNQAEAEKARARAKEVLKNPDASKLDIEAANKRLKEADARLKALNSSNGLYYSKDD.

This sequence belongs to the ATPase epsilon chain family. In terms of assembly, F-type ATPases have 2 components, CF(1) - the catalytic core - and CF(0) - the membrane proton channel. CF(1) has five subunits: alpha(3), beta(3), gamma(1), delta(1), epsilon(1). CF(0) has three main subunits: a, b and c.

It is found in the cell inner membrane. In terms of biological role, produces ATP from ADP in the presence of a proton gradient across the membrane. This Francisella tularensis subsp. tularensis (strain FSC 198) protein is ATP synthase epsilon chain.